The sequence spans 313 residues: Probable cell division protein WhiA (313 aa).

The segment at residues 278–311 is a DNA-binding region (H-T-H motif); the sequence is SLKELGKLLDPPLSKSGVNHRLRRIKSIANEIRG.

This sequence belongs to the WhiA family.

In terms of biological role, involved in cell division and chromosome segregation. The chain is Probable cell division protein WhiA from Halothermothrix orenii (strain H 168 / OCM 544 / DSM 9562).